We begin with the raw amino-acid sequence, 678 residues long: Zinc finger translocation-associated protein (678 aa).

Disordered stretches follow at residues 1 to 100, 174 to 250, 333 to 413, and 493 to 583; these read MEPG…PGRD, GAGG…GSRG, LSEL…RDHR, and PESP…NYQP. Residues 66 to 78 show a composition bias toward low complexity; sequence PSSRARGPASSGR. Over residues 79–88 the composition is skewed to basic and acidic residues; that stretch reads KYSDHCEARA. Acidic residues predominate over residues 187-200; that stretch reads AEEEEEEDEEEEEG. The segment covering 205-214 has biased composition (low complexity); that stretch reads ACPPKGSGKA. Lys-375 participates in a covalent cross-link: Glycyl lysine isopeptide (Lys-Gly) (interchain with G-Cter in SUMO2). The span at 493–509 shows a compositional bias: low complexity; sequence PESPSVPVAPSTASASE. Composition is skewed to acidic residues over residues 512–524 and 539–549; these read GGAE…EEWW and AEEEDDEDDSQ. Residues 557 to 572 are compositionally biased toward pro residues; it reads PPLPLPPPPPPPPPPP. The segment covering 573-583 has biased composition (basic and acidic residues); that stretch reads RSREQRRNYQP.

This chain is Zinc finger translocation-associated protein, found in Mus musculus (Mouse).